A 217-amino-acid polypeptide reads, in one-letter code: Thiamine-phosphate synthase (217 aa).

Residues 39 to 43 and Asn-71 contribute to the 4-amino-2-methyl-5-(diphosphooxymethyl)pyrimidine site; that span reads QYRDK. Residues Asp-72 and Asp-91 each coordinate Mg(2+). Residue Thr-110 coordinates 4-amino-2-methyl-5-(diphosphooxymethyl)pyrimidine. 137–139 is a 2-[(2R,5Z)-2-carboxy-4-methylthiazol-5(2H)-ylidene]ethyl phosphate binding site; sequence SHT. Lys-140 serves as a coordination point for 4-amino-2-methyl-5-(diphosphooxymethyl)pyrimidine. Gly-167 serves as a coordination point for 2-[(2R,5Z)-2-carboxy-4-methylthiazol-5(2H)-ylidene]ethyl phosphate.

This sequence belongs to the thiamine-phosphate synthase family. The cofactor is Mg(2+).

The catalysed reaction is 2-[(2R,5Z)-2-carboxy-4-methylthiazol-5(2H)-ylidene]ethyl phosphate + 4-amino-2-methyl-5-(diphosphooxymethyl)pyrimidine + 2 H(+) = thiamine phosphate + CO2 + diphosphate. It catalyses the reaction 2-(2-carboxy-4-methylthiazol-5-yl)ethyl phosphate + 4-amino-2-methyl-5-(diphosphooxymethyl)pyrimidine + 2 H(+) = thiamine phosphate + CO2 + diphosphate. The enzyme catalyses 4-methyl-5-(2-phosphooxyethyl)-thiazole + 4-amino-2-methyl-5-(diphosphooxymethyl)pyrimidine + H(+) = thiamine phosphate + diphosphate. The protein operates within cofactor biosynthesis; thiamine diphosphate biosynthesis; thiamine phosphate from 4-amino-2-methyl-5-diphosphomethylpyrimidine and 4-methyl-5-(2-phosphoethyl)-thiazole: step 1/1. Condenses 4-methyl-5-(beta-hydroxyethyl)thiazole monophosphate (THZ-P) and 2-methyl-4-amino-5-hydroxymethyl pyrimidine pyrophosphate (HMP-PP) to form thiamine monophosphate (TMP). The polypeptide is Thiamine-phosphate synthase (Alcanivorax borkumensis (strain ATCC 700651 / DSM 11573 / NCIMB 13689 / SK2)).